Consider the following 335-residue polypeptide: Tetraacyldisaccharide 4'-kinase (335 aa).

58–65 contacts ATP; it reads TVGGSGKT.

This sequence belongs to the LpxK family.

It carries out the reaction a lipid A disaccharide + ATP = a lipid IVA + ADP + H(+). The protein operates within glycolipid biosynthesis; lipid IV(A) biosynthesis; lipid IV(A) from (3R)-3-hydroxytetradecanoyl-[acyl-carrier-protein] and UDP-N-acetyl-alpha-D-glucosamine: step 6/6. Its function is as follows. Transfers the gamma-phosphate of ATP to the 4'-position of a tetraacyldisaccharide 1-phosphate intermediate (termed DS-1-P) to form tetraacyldisaccharide 1,4'-bis-phosphate (lipid IVA). The protein is Tetraacyldisaccharide 4'-kinase of Shewanella sp. (strain MR-7).